A 95-amino-acid polypeptide reads, in one-letter code: Aspartyl/glutamyl-tRNA(Asn/Gln) amidotransferase subunit C (95 aa).

The protein belongs to the GatC family. Heterotrimer of A, B and C subunits.

It catalyses the reaction L-glutamyl-tRNA(Gln) + L-glutamine + ATP + H2O = L-glutaminyl-tRNA(Gln) + L-glutamate + ADP + phosphate + H(+). It carries out the reaction L-aspartyl-tRNA(Asn) + L-glutamine + ATP + H2O = L-asparaginyl-tRNA(Asn) + L-glutamate + ADP + phosphate + 2 H(+). Allows the formation of correctly charged Asn-tRNA(Asn) or Gln-tRNA(Gln) through the transamidation of misacylated Asp-tRNA(Asn) or Glu-tRNA(Gln) in organisms which lack either or both of asparaginyl-tRNA or glutaminyl-tRNA synthetases. The reaction takes place in the presence of glutamine and ATP through an activated phospho-Asp-tRNA(Asn) or phospho-Glu-tRNA(Gln). This is Aspartyl/glutamyl-tRNA(Asn/Gln) amidotransferase subunit C from Chlorobium limicola (strain DSM 245 / NBRC 103803 / 6330).